The sequence spans 314 residues: MSYAADVKKELTGLRVHDGNAKAELSALMRMNGVSTLGIDQTVSVKTENAAIARRIYTLLKQNYTQIEVEVTVAEHNYMSQHKSYGVLLKNKVSDVLTDLGVDPFGLHPDIPDRILNQVDKRRSFLRGAFLAAGSVNSPEKANYHLEIFTTHEELAETLRLMMAEFGLPAKIIDRSGGYVIYIKRAEKIVDFLSTIGATQTMLRFEDIRMMRDMRNSVNRMTNAELANIQKTADAANKQVQQILFIANEIGDLDLLPKKLRDIAKARLEHPDDSLAELGDRLEISKSGANHRMRKLKALEDMINAGVTYDLNKL.

The H-T-H motif DNA-binding region spans 274–305; sequence SLAELGDRLEISKSGANHRMRKLKALEDMINA.

Belongs to the WhiA family.

Functionally, involved in cell division and chromosome segregation. The polypeptide is Probable cell division protein WhiA (Leuconostoc citreum (strain KM20)).